A 700-amino-acid polypeptide reads, in one-letter code: Elongation factor G (700 aa).

Residues Asn-10–Leu-286 form the tr-type G domain. GTP contacts are provided by residues Ala-19–Thr-26, Asp-83–His-87, and Asn-137–Asp-140.

The protein belongs to the TRAFAC class translation factor GTPase superfamily. Classic translation factor GTPase family. EF-G/EF-2 subfamily.

It is found in the cytoplasm. Functionally, catalyzes the GTP-dependent ribosomal translocation step during translation elongation. During this step, the ribosome changes from the pre-translocational (PRE) to the post-translocational (POST) state as the newly formed A-site-bound peptidyl-tRNA and P-site-bound deacylated tRNA move to the P and E sites, respectively. Catalyzes the coordinated movement of the two tRNA molecules, the mRNA and conformational changes in the ribosome. This Rhodococcus erythropolis (strain PR4 / NBRC 100887) protein is Elongation factor G.